We begin with the raw amino-acid sequence, 467 residues long: MAIKTPKEIVKILNEYIIGQDEAKKSVAIALYNRYRRMQLSKQMQHEITPKNLLMAGPTGVGKTEIARRLASIVEAPFVKVEATKFTEVGYVGRDVESMVRDLVGEAVRMEEKDQFARVKPQATKEANKQLVRLLAPGVKREKRENQMQQMQDMMSMLMGGANPNNQNNDQEEVTDEVRNERMDVAEKLNKGLLEDREVTIEVEQAPKANPMSDMMGQMGMDMGSMLNDIMPKKKVKRTLSVRDAREVLIQEESRKMVDYDTIYQRAIERSQNNGIIFIDEIDKIIAGNKRNSGEVSREGVQRDVLPIVEGSTVNTKYGPVSTDHILFIAAGAFAESKPSDLIPELQGRFPIRVELNALTKDDFVKILKDPQNSLLKQYIALMKADGIKLIFTQEAVDKIAQIAFDVNQGTDNIGARRLSTILEKLLEDVLYEGPDMEMGEITITEAYVEEKLHDIIMNKDLTKFIL.

Residues Ile-18, Gly-60–Glu-65, Asp-280, Glu-345, and Arg-417 each bind ATP.

It belongs to the ClpX chaperone family. HslU subfamily. As to quaternary structure, a double ring-shaped homohexamer of HslV is capped on each side by a ring-shaped HslU homohexamer. The assembly of the HslU/HslV complex is dependent on binding of ATP.

The protein resides in the cytoplasm. Its function is as follows. ATPase subunit of a proteasome-like degradation complex; this subunit has chaperone activity. The binding of ATP and its subsequent hydrolysis by HslU are essential for unfolding of protein substrates subsequently hydrolyzed by HslV. HslU recognizes the N-terminal part of its protein substrates and unfolds these before they are guided to HslV for hydrolysis. This Lactobacillus helveticus (strain DPC 4571) protein is ATP-dependent protease ATPase subunit HslU.